Here is a 423-residue protein sequence, read N- to C-terminus: Lipase member M (423 aa).

A signal peptide spans 1–33; sequence MLETLSRQWIVSHRMEMWLLILVAYMFQRNVNS. N-linked (GlcNAc...) asparagine glycosylation is present at N48. Residues 92-392 enclose the AB hydrolase-1 domain; that stretch reads PVVLLQHGLV…EWAHVDFIWG (301 aa). S186 (nucleophile) is an active-site residue. C260 and C269 are disulfide-bonded. Active-site charge relay system residues include D357 and H386.

The protein belongs to the AB hydrolase superfamily. Lipase family. As to expression, exclusively expressed in the epidermis within the granular keratinocytes.

The protein resides in the secreted. Its function is as follows. Plays a highly specific role in the last step of keratinocyte differentiation. May have an essential function in lipid metabolism of the most differentiated epidermal layers. This Homo sapiens (Human) protein is Lipase member M (LIPM).